Here is a 468-residue protein sequence, read N- to C-terminus: Tyrosine-protein phosphatase YopH (468 aa).

The disordered stretch occupies residues 127 to 194 (ARGHVSSHSH…TVSPYGPEAR (68 aa)). Positions 130-141 (HVSSHSHSALHA) are enriched in low complexity. The 310-residue stretch at 152 to 461 (SHLDPRTPPL…DVLIKLAEGQ (310 aa)) folds into the Tyrosine-protein phosphatase domain. The active-site Phosphocysteine intermediate is cysteine 403.

It belongs to the protein-tyrosine phosphatase family. Non-receptor class subfamily.

The protein localises to the secreted. It catalyses the reaction O-phospho-L-tyrosyl-[protein] + H2O = L-tyrosyl-[protein] + phosphate. In terms of biological role, essential virulence determinant. This protein is a protein tyrosine phosphatase. The essential function of YopH in Yersinia pathogenesis is host-protein dephosphorylation. It contributes to the ability of the bacteria to resist phagocytosis by peritoneal macrophages. This Yersinia pseudotuberculosis serotype I (strain IP32953) protein is Tyrosine-protein phosphatase YopH (yopH).